A 198-amino-acid chain; its full sequence is 3-isopropylmalate dehydratase small subunit (198 aa).

This sequence belongs to the LeuD family. LeuD type 1 subfamily. In terms of assembly, heterodimer of LeuC and LeuD.

It catalyses the reaction (2R,3S)-3-isopropylmalate = (2S)-2-isopropylmalate. The protein operates within amino-acid biosynthesis; L-leucine biosynthesis; L-leucine from 3-methyl-2-oxobutanoate: step 2/4. Catalyzes the isomerization between 2-isopropylmalate and 3-isopropylmalate, via the formation of 2-isopropylmaleate. The protein is 3-isopropylmalate dehydratase small subunit of Colwellia psychrerythraea (strain 34H / ATCC BAA-681) (Vibrio psychroerythus).